The chain runs to 337 residues: ATP-dependent 6-phosphofructokinase (337 aa).

Glycine 11 lines the ATP pocket. Arginine 21–arginine 25 contacts ADP. ATP contacts are provided by residues arginine 72–tyrosine 73 and glycine 102–serine 105. Residue aspartate 103 participates in Mg(2+) binding. Residue threonine 125–aspartate 127 participates in substrate binding. The active-site Proton acceptor is aspartate 127. Arginine 154 serves as a coordination point for ADP. Residues arginine 162 and methionine 169 to arginine 171 each bind substrate. ADP-binding positions include glycine 185–aspartate 187, arginine 212, and lysine 214–histidine 216. Substrate contacts are provided by residues glutamate 223, arginine 245, and histidine 251–arginine 254.

This sequence belongs to the phosphofructokinase type A (PFKA) family. ATP-dependent PFK group I subfamily. Prokaryotic clade 'B1' sub-subfamily. Homotetramer. It depends on Mg(2+) as a cofactor.

It is found in the cytoplasm. It carries out the reaction beta-D-fructose 6-phosphate + ATP = beta-D-fructose 1,6-bisphosphate + ADP + H(+). It participates in carbohydrate degradation; glycolysis; D-glyceraldehyde 3-phosphate and glycerone phosphate from D-glucose: step 3/4. Its activity is regulated as follows. Allosterically activated by ADP and other diphosphonucleosides, and allosterically inhibited by phosphoenolpyruvate. Functionally, catalyzes the phosphorylation of D-fructose 6-phosphate to fructose 1,6-bisphosphate by ATP, the first committing step of glycolysis. This chain is ATP-dependent 6-phosphofructokinase, found in Streptococcus equi subsp. zooepidemicus (strain H70).